Here is a 282-residue protein sequence, read N- to C-terminus: Bifunctional protein FolD 2 (282 aa).

NADP(+)-binding positions include 165-167 and serine 190; that span reads GRS.

This sequence belongs to the tetrahydrofolate dehydrogenase/cyclohydrolase family. In terms of assembly, homodimer.

The catalysed reaction is (6R)-5,10-methylene-5,6,7,8-tetrahydrofolate + NADP(+) = (6R)-5,10-methenyltetrahydrofolate + NADPH. It catalyses the reaction (6R)-5,10-methenyltetrahydrofolate + H2O = (6R)-10-formyltetrahydrofolate + H(+). The protein operates within one-carbon metabolism; tetrahydrofolate interconversion. Functionally, catalyzes the oxidation of 5,10-methylenetetrahydrofolate to 5,10-methenyltetrahydrofolate and then the hydrolysis of 5,10-methenyltetrahydrofolate to 10-formyltetrahydrofolate. This is Bifunctional protein FolD 2 from Acinetobacter baylyi (strain ATCC 33305 / BD413 / ADP1).